Reading from the N-terminus, the 242-residue chain is Triosephosphate isomerase (242 aa).

9–11 (NWK) is a binding site for substrate. Residue His99 is the Electrophile of the active site. The active-site Proton acceptor is the Glu169. Substrate-binding positions include Gly175, Ser207, and 228–229 (GG).

This sequence belongs to the triosephosphate isomerase family. As to quaternary structure, homodimer.

It localises to the cytoplasm. It catalyses the reaction D-glyceraldehyde 3-phosphate = dihydroxyacetone phosphate. It participates in carbohydrate biosynthesis; gluconeogenesis. It functions in the pathway carbohydrate degradation; glycolysis; D-glyceraldehyde 3-phosphate from glycerone phosphate: step 1/1. Involved in the gluconeogenesis. Catalyzes stereospecifically the conversion of dihydroxyacetone phosphate (DHAP) to D-glyceraldehyde-3-phosphate (G3P). This Mycoplasma mobile (strain ATCC 43663 / 163K / NCTC 11711) (Mesomycoplasma mobile) protein is Triosephosphate isomerase.